Consider the following 624-residue polypeptide: DNA mismatch repair protein MutL (624 aa).

It belongs to the DNA mismatch repair MutL/HexB family.

This protein is involved in the repair of mismatches in DNA. It is required for dam-dependent methyl-directed DNA mismatch repair. May act as a 'molecular matchmaker', a protein that promotes the formation of a stable complex between two or more DNA-binding proteins in an ATP-dependent manner without itself being part of a final effector complex. The chain is DNA mismatch repair protein MutL from Xanthomonas campestris pv. campestris (strain B100).